A 681-amino-acid chain; its full sequence is Potassium-transporting ATPase ATP-binding subunit 1 (681 aa).

A run of 4 helical transmembrane segments spans residues leucine 30–isoleucine 50, leucine 59–alanine 79, isoleucine 216–threonine 236, and isoleucine 255–isoleucine 275. Aspartate 306 functions as the 4-aspartylphosphate intermediate in the catalytic mechanism. ATP is bound by residues aspartate 343, glutamate 347, phenylalanine 376–serine 383, and lysine 394. Mg(2+) contacts are provided by aspartate 517 and aspartate 521. Helical transmembrane passes span phenylalanine 587–methionine 607, alanine 615–leucine 635, and leucine 661–valine 681.

It belongs to the cation transport ATPase (P-type) (TC 3.A.3) family. Type IA subfamily. The system is composed of three essential subunits: KdpA, KdpB and KdpC.

Its subcellular location is the cell membrane. It catalyses the reaction K(+)(out) + ATP + H2O = K(+)(in) + ADP + phosphate + H(+). Its function is as follows. Part of the high-affinity ATP-driven potassium transport (or Kdp) system, which catalyzes the hydrolysis of ATP coupled with the electrogenic transport of potassium into the cytoplasm. This subunit is responsible for energy coupling to the transport system and for the release of the potassium ions to the cytoplasm. The sequence is that of Potassium-transporting ATPase ATP-binding subunit 1 from Listeria innocua serovar 6a (strain ATCC BAA-680 / CLIP 11262).